We begin with the raw amino-acid sequence, 136 residues long: Large ribosomal subunit protein bL17 (136 aa).

It belongs to the bacterial ribosomal protein bL17 family. Part of the 50S ribosomal subunit. Contacts protein L32.

The polypeptide is Large ribosomal subunit protein bL17 (Rickettsia prowazekii (strain Madrid E)).